Here is a 300-residue protein sequence, read N- to C-terminus: Glutamyl-Q tRNA(Asp) synthetase (300 aa).

L-glutamate is bound by residues 8 to 12 (RFAPS) and Glu44. Positions 11–21 (PSPTGALHAGS) match the 'HIGH' region motif. Zn(2+)-binding residues include Cys100, Cys102, Tyr126, and Cys130. The L-glutamate site is built by Tyr190 and Arg208. The short motif at 246–250 (KLSKQ) is the 'KMSKS' region element. Lys249 contributes to the ATP binding site.

It belongs to the class-I aminoacyl-tRNA synthetase family. GluQ subfamily. Zn(2+) is required as a cofactor.

In terms of biological role, catalyzes the tRNA-independent activation of glutamate in presence of ATP and the subsequent transfer of glutamate onto a tRNA(Asp). Glutamate is transferred on the 2-amino-5-(4,5-dihydroxy-2-cyclopenten-1-yl) moiety of the queuosine in the wobble position of the QUC anticodon. This Leptothrix cholodnii (strain ATCC 51168 / LMG 8142 / SP-6) (Leptothrix discophora (strain SP-6)) protein is Glutamyl-Q tRNA(Asp) synthetase.